Here is a 403-residue protein sequence, read N- to C-terminus: uncharacterized protein (403 aa).

His-81 contacts Zn(2+). Asp-83 is a catalytic residue. Zn(2+) is bound at residue Asp-114. Residue Glu-148 is the Proton acceptor of the active site. Positions 149, 174, and 374 each coordinate Zn(2+).

The protein belongs to the peptidase M20A family. The cofactor is Zn(2+). It depends on Co(2+) as a cofactor.

This is an uncharacterized protein from Escherichia coli O157:H7.